Consider the following 360-residue polypeptide: Biotin synthase (360 aa).

The 233-residue stretch at 83–315 folds into the Radical SAM core domain; the sequence is FCGKYFDLCT…KSFLRYCGGR (233 aa). Positions 101, 105, and 108 each coordinate [4Fe-4S] cluster. Positions 145, 180, 240, and 310 each coordinate [2Fe-2S] cluster.

The protein belongs to the radical SAM superfamily. Biotin synthase family. Homodimer. [4Fe-4S] cluster serves as cofactor. [2Fe-2S] cluster is required as a cofactor.

It catalyses the reaction (4R,5S)-dethiobiotin + (sulfur carrier)-SH + 2 reduced [2Fe-2S]-[ferredoxin] + 2 S-adenosyl-L-methionine = (sulfur carrier)-H + biotin + 2 5'-deoxyadenosine + 2 L-methionine + 2 oxidized [2Fe-2S]-[ferredoxin]. Its pathway is cofactor biosynthesis; biotin biosynthesis; biotin from 7,8-diaminononanoate: step 2/2. Functionally, catalyzes the conversion of dethiobiotin (DTB) to biotin by the insertion of a sulfur atom into dethiobiotin via a radical-based mechanism. The protein is Biotin synthase of Fusobacterium nucleatum subsp. nucleatum (strain ATCC 25586 / DSM 15643 / BCRC 10681 / CIP 101130 / JCM 8532 / KCTC 2640 / LMG 13131 / VPI 4355).